The primary structure comprises 302 residues: Deoxyhypusine hydroxylase-B (302 aa).

HEAT-like PBS-type repeat units lie at residues 49-75, 82-108, 171-200, 204-230, and 237-263; these read LAHE…VLKD, VRHE…SLAV, MYER…LGVK, LRHE…VLKN, and VRHE…FAKD. The Fe cation site is built by H51, E52, H84, and E85. H206, E207, H239, and E240 together coordinate Fe cation.

This sequence belongs to the deoxyhypusine hydroxylase family. The cofactor is Fe(2+).

The enzyme catalyses [eIF5A protein]-deoxyhypusine + AH2 + O2 = [eIF5A protein]-hypusine + A + H2O. It participates in protein modification; eIF5A hypusination. Catalyzes the hydroxylation of the N(6)-(4-aminobutyl)-L-lysine intermediate to form hypusine, an essential post-translational modification only found in mature eIF-5A factor. The chain is Deoxyhypusine hydroxylase-B from Oryza sativa subsp. japonica (Rice).